A 182-amino-acid chain; its full sequence is Probable RNA 2'-phosphotransferase (182 aa).

This sequence belongs to the KptA/TPT1 family.

In terms of biological role, removes the 2'-phosphate from RNA via an intermediate in which the phosphate is ADP-ribosylated by NAD followed by a presumed transesterification to release the RNA and generate ADP-ribose 1''-2''-cyclic phosphate (APPR&gt;P). May function as an ADP-ribosylase. This is Probable RNA 2'-phosphotransferase from Herpetosiphon aurantiacus (strain ATCC 23779 / DSM 785 / 114-95).